A 184-amino-acid polypeptide reads, in one-letter code: Translation initiation factor IF-3 (184 aa).

It belongs to the IF-3 family. In terms of assembly, monomer.

It is found in the cytoplasm. IF-3 binds to the 30S ribosomal subunit and shifts the equilibrium between 70S ribosomes and their 50S and 30S subunits in favor of the free subunits, thus enhancing the availability of 30S subunits on which protein synthesis initiation begins. This chain is Translation initiation factor IF-3, found in Hamiltonella defensa subsp. Acyrthosiphon pisum (strain 5AT).